A 193-amino-acid polypeptide reads, in one-letter code: Thymidine kinase (193 aa).

ATP is bound by residues 16 to 23 (GPMFSGKS) and 89 to 92 (DEIQ). Glutamate 90 functions as the Proton acceptor in the catalytic mechanism. The Zn(2+) site is built by cysteine 146, cysteine 149, cysteine 184, and cysteine 187.

This sequence belongs to the thymidine kinase family. Homotetramer.

It localises to the cytoplasm. It catalyses the reaction thymidine + ATP = dTMP + ADP + H(+). In Thermoanaerobacter pseudethanolicus (strain ATCC 33223 / 39E) (Clostridium thermohydrosulfuricum), this protein is Thymidine kinase.